The following is a 357-amino-acid chain: Peptide chain release factor 1 (357 aa).

Q236 carries the N5-methylglutamine modification. A compositionally biased stretch (basic and acidic residues) spans 283 to 309 (ERRKKDQERANNRREQIGSGDRSERIR). Residues 283-313 (ERRKKDQERANNRREQIGSGDRSERIRTYNF) form a disordered region.

It belongs to the prokaryotic/mitochondrial release factor family. Post-translationally, methylated by PrmC. Methylation increases the termination efficiency of RF1.

Its subcellular location is the cytoplasm. Its function is as follows. Peptide chain release factor 1 directs the termination of translation in response to the peptide chain termination codons UAG and UAA. The sequence is that of Peptide chain release factor 1 from Rickettsia bellii (strain OSU 85-389).